Here is a 213-residue protein sequence, read N- to C-terminus: Response regulator GacA (213 aa).

Positions 3 to 119 constitute a Response regulatory domain; sequence RVLVVDDHDL…EMVQAIRLVF (117 aa). Aspartate 54 carries the post-translational modification 4-aspartylphosphate. The HTH luxR-type domain maps to 142-207; the sequence is SDSPFDALSE…ELTLLAVRHG (66 aa). Residues 166–185 constitute a DNA-binding region (H-T-H motif); that stretch reads VQIISDKLCLSPKTVNTYRY.

Post-translationally, phosphorylated by GacS.

Functionally, member of the two-component regulatory system GacA/GacS which controls the expression of secondary metabolites and extracellular products. Acts (probably primarily) by activating expression of CsrA1 and CsrA2 antagonist small RNAs (sRNA) RsmX, RsmY and RsmZ which bind to and prevent translation repression by CsrA1 and CsrA2. Involved in the regulation of secondary metabolism and in the synthesis of the antifungal factors cyanide, 2,4-diacetylphloroglucinol and pyoluteorin. Involved in synthesis of the autoinducing signal (unrelated to N-acylhomoserine lactones, induces the Gac/Csr cascade). Exercises positive post-transcriptional control over the hcnABC and aprA genes; acts upstream of CsrA2 (rsmA). Controls expression of csrA1 (rsmE) and csrA2. The sequence is that of Response regulator GacA from Pseudomonas protegens (strain DSM 19095 / LMG 27888 / CFBP 6595 / CHA0).